The chain runs to 396 residues: L-lactate dehydrogenase (396 aa).

One can recognise an FMN hydroxy acid dehydrogenase domain in the interval 1-380 (MIISAASDYR…SGDSLVQELG (380 aa)). Y24 contributes to the substrate binding site. 2 residues coordinate FMN: S106 and Q127. Residue Y129 coordinates substrate. Residue T155 participates in FMN binding. Substrate is bound at residue R164. Residue K251 participates in FMN binding. The Proton acceptor role is filled by H275. Position 278 (R278) interacts with substrate. 306–330 (DSGIRNGLDVVRMIALGADTVLLGR) is a binding site for FMN.

It belongs to the FMN-dependent alpha-hydroxy acid dehydrogenase family. It depends on FMN as a cofactor.

The protein localises to the cell inner membrane. The catalysed reaction is (S)-lactate + A = pyruvate + AH2. Functionally, catalyzes the conversion of L-lactate to pyruvate. Is coupled to the respiratory chain. The chain is L-lactate dehydrogenase from Salmonella choleraesuis (strain SC-B67).